The following is a 481-amino-acid chain: ATP synthase subunit beta (481 aa).

160–167 (GGAGVGKT) serves as a coordination point for ATP.

It belongs to the ATPase alpha/beta chains family. F-type ATPases have 2 components, CF(1) - the catalytic core - and CF(0) - the membrane proton channel. CF(1) has five subunits: alpha(3), beta(3), gamma(1), delta(1), epsilon(1). CF(0) has three main subunits: a(1), b(2) and c(9-12). The alpha and beta chains form an alternating ring which encloses part of the gamma chain. CF(1) is attached to CF(0) by a central stalk formed by the gamma and epsilon chains, while a peripheral stalk is formed by the delta and b chains.

The protein resides in the cell inner membrane. The catalysed reaction is ATP + H2O + 4 H(+)(in) = ADP + phosphate + 5 H(+)(out). Its function is as follows. Produces ATP from ADP in the presence of a proton gradient across the membrane. The catalytic sites are hosted primarily by the beta subunits. This Myxococcus xanthus (strain DK1622) protein is ATP synthase subunit beta.